The sequence spans 174 residues: SUSHI domain-containing protein E3 (174 aa).

A signal peptide spans 1 to 20 (MATEVQFACALVVLLGCGYA). The 63-residue stretch at 35–97 (QNCTTYPSIE…WTNGPPSCVK (63 aa)) folds into the Sushi domain. Cystine bridges form between Cys-37–Cys-78 and Cys-64–Cys-95. Residues 108 to 127 (STSTTPVTTGTFPDPQNTTH) show a composition bias toward low complexity. The interval 108–133 (STSTTPVTTGTFPDPQNTTHPTHHTV) is disordered. A helical membrane pass occupies residues 145–165 (FGYTPWAIITLVVIILLVVWI).

It is found in the host membrane. The sequence is that of SUSHI domain-containing protein E3 (E3) from Equine herpesvirus 2 (strain 86/87) (EHV-2).